The chain runs to 118 residues: Putative pterin-4-alpha-carbinolamine dehydratase (118 aa).

Belongs to the pterin-4-alpha-carbinolamine dehydratase family.

The enzyme catalyses (4aS,6R)-4a-hydroxy-L-erythro-5,6,7,8-tetrahydrobiopterin = (6R)-L-erythro-6,7-dihydrobiopterin + H2O. This Xanthomonas campestris pv. campestris (strain B100) protein is Putative pterin-4-alpha-carbinolamine dehydratase.